The chain runs to 455 residues: Glutamyl-tRNA reductase (455 aa).

Substrate is bound by residues 49–52, serine 109, 114–116, and glutamine 120; these read TCNR and ETQ. The active-site Nucleophile is the cysteine 50. 189–194 is an NADP(+) binding site; sequence GAGKMG.

It belongs to the glutamyl-tRNA reductase family. In terms of assembly, homodimer.

It carries out the reaction (S)-4-amino-5-oxopentanoate + tRNA(Glu) + NADP(+) = L-glutamyl-tRNA(Glu) + NADPH + H(+). It functions in the pathway porphyrin-containing compound metabolism; protoporphyrin-IX biosynthesis; 5-aminolevulinate from L-glutamyl-tRNA(Glu): step 1/2. Its function is as follows. Catalyzes the NADPH-dependent reduction of glutamyl-tRNA(Glu) to glutamate 1-semialdehyde (GSA). In Geobacillus thermodenitrificans (strain NG80-2), this protein is Glutamyl-tRNA reductase.